We begin with the raw amino-acid sequence, 482 residues long: Probable F-box protein At1g30780 (482 aa).

An F-box domain is found at 230-280 (EIDLDSLPFDLKMVILTRLSAKSLTNFKRVSKMWSSIIGSQRFIDSFFTMS).

This chain is Probable F-box protein At1g30780, found in Arabidopsis thaliana (Mouse-ear cress).